A 474-amino-acid polypeptide reads, in one-letter code: Hepatocyte nuclear factor 4-alpha (474 aa).

A DNA-binding region (nuclear receptor) is located at residues 57–132 (SALCAICGDR…AGMKKEAVQN (76 aa)). 2 NR C4-type zinc fingers span residues 60-80 (CAICGDRATGKHYGASSCDGC) and 96-120 (CRFSRQCVVDKDKRNQCRYCRLKKC). 2 positions are modified to phosphoserine; by PKA: Ser142 and Ser143. A Phosphotyrosine modification is found at Tyr144. In terms of domain architecture, NR LBD spans 147 to 377 (SSLPSINALL…NLLQEMLLGG (231 aa)). The residue at position 166 (Thr166) is a Phosphothreonine. Ser167 is modified (phosphoserine). Residues Lys234 and Lys307 each participate in a glycyl lysine isopeptide (Lys-Gly) (interchain with G-Cter in ubiquitin) cross-link. Ser313 is modified (phosphoserine; by AMPK). A 9aaTAD motif is present at residues 368 to 376 (NLLQEMLLG). The segment at 413-450 (SNGQMCEWPRPRGQAATPETPQPSPPSGSGSESYKLLP) is disordered. Phosphothreonine occurs at positions 429 and 432. Phosphoserine is present on Ser436. Lys458 carries the post-translational modification N6-acetyllysine.

Belongs to the nuclear hormone receptor family. NR2 subfamily. Homodimerization is required for HNF4-alpha to bind to its recognition site. Interacts with CLOCK, BMAL1, CRY1, CRY2, PER1 and PER2. Interacts with NR0B2/SHP; the resulting heterodimer is transcriptionally inactive. Interacts with DDX3X; this interaction disrupts the interaction between HNF4 and NR0B2 that forms inactive heterodimers and enhances the formation of active HNF4 homodimers. Post-translationally, phosphorylation at Ser-313 by AMPK reduces the ability to form homodimers and bind DNA. Phosphorylated in the recognition sequence R-R-S-S near the DNA-binding domain; phosphorylation results in decrease in DNA-binding activity. Phosphorylation of HNF4 depends on the diet and is decreased by a carbohydrate-rich diet and is increased by fasting. In terms of processing, the N-terminus is blocked. Acetylation at Lys-458 lowers transcriptional activation by about two-fold. Liver, kidney and intestine.

The protein localises to the nucleus. Functionally, transcriptional regulator which controls the expression of hepatic genes during the transition of endodermal cells to hepatic progenitor cells, facilitating the recruitment of RNA pol II to the promoters of target genes. Activates the transcription of CYP2C38. Represses the CLOCK-BMAL1 transcriptional activity and is essential for circadian rhythm maintenance and period regulation in the liver and colon cells. The chain is Hepatocyte nuclear factor 4-alpha (Hnf4a) from Rattus norvegicus (Rat).